A 603-amino-acid chain; its full sequence is MSNELDFRSVRLLKNDPVSFQKFPYSNEDEAWKTYLENPLTAATKAMMRVNGDEESVAALSFLYDYYMGPKEKRILSSSTGGRNDQGKKFYHSMDYEPDLAPLESPTHLMKFLTENVSGSPDYTDQLKKNNLLGLEGVLPTPGKTNTVPPGPSKLEASSMDSYLLPASDIYDNGSLNSLFESIHGVPPTQRWQPDSTFKDDPQESLLFPDILKTSPDPPCPEDYPGLKSDFEYTLGSPKAIHIKAGESPMAYLNKGQFYPVTLRTPAGGKGLALSSSKVKSVVMVVFDNDKVPVEQLRFWRHWHSRQPTAKQRVIDVADCKENFNTVQHIEEVAYNALSFVWNVNEEAKVFIGVNCLSTDFSSQKGVKGVPLNLQIDTYDCGAGTERLVHRAVCQIKIFCDKGAERKMRDDERKQFRRKVKCPDSSNNAGIKGCLLSGFRGNETTYLRPETDLETQPVLFIPNLHFSSLQRPGGVVPSAGHSSSDRLPLKRTCSPFAEEFEPLPSKQAKEDDLQRVLLYVRRETEEVFDALMLKTPDLKGLRNAISEKYGLPEENICKVYKKCKRGILVNMDNNIIQHYSNHVAFLLDMGELDGKIQIILKEL.

The segment at 30-95 (EAWKTYLENP…QGKKFYHSMD (66 aa)) is transcription activation. A Grh/CP2 DB domain is found at 226–461 (GLKSDFEYTL…DLETQPVLFI (236 aa)).

The protein belongs to the grh/CP2 family. Grainyhead subfamily. Homodimer, also forms heterodimers with GRHL1 and GRHL2. Interacts with LMO4.

The protein localises to the nucleus. In terms of biological role, transcription factor playing important roles in primary neurulation and in the differentiation of stratified epithelia of both ectodermal and endodermal origin. Binds directly to the consensus DNA sequence 5'-AACCGGTT-3' acting as an activator and repressor on distinct target genes. Essential for epidermal differentiation and barrier formation at the end of embryogenesis with TGM3 as critical direct target. Exhibits functional redundancy with GRHL2 in epidermal morphogenetic events such as eyelid fusion and epidermal wound repair. Despite being dispensable during normal epidermal homeostasis in the adulthood, is again required for barrier repair after immune-mediated epidermal damage, regulates distinct gene batteries in embryonic epidermal differentiation and adult epidermal barrier reformation after injury. Plays unique and cooperative roles with GRHL2 in establishing distinct zones of primary neurulation. Essential for spinal closure, functions cooperatively with GRHL2 in closure 2 (forebrain/midbrain boundary) and posterior neuropore closure. Also required for proper development of the oral periderm. No genetic interaction with GRHL1, no functional cooperativity due to diverse target gene selectivity. This is Grainyhead-like protein 3 homolog from Mus musculus (Mouse).